A 182-amino-acid polypeptide reads, in one-letter code: Ribosome maturation factor RimM (182 aa).

The 80-residue stretch at Glu103–Phe182 folds into the PRC barrel domain.

It belongs to the RimM family. In terms of assembly, binds ribosomal protein uS19.

Its subcellular location is the cytoplasm. An accessory protein needed during the final step in the assembly of 30S ribosomal subunit, possibly for assembly of the head region. Essential for efficient processing of 16S rRNA. May be needed both before and after RbfA during the maturation of 16S rRNA. It has affinity for free ribosomal 30S subunits but not for 70S ribosomes. This Vibrio vulnificus (strain CMCP6) protein is Ribosome maturation factor RimM.